The following is a 301-amino-acid chain: Porin (301 aa).

Homotrimer.

Its subcellular location is the cell outer membrane. Its function is as follows. Forms channels that allow the passive diffusion of small hydrophilic solutes up to an exclusion limit of about 0.6 kDa. The sequence is that of Porin from Rhodobacter capsulatus (Rhodopseudomonas capsulata).